We begin with the raw amino-acid sequence, 251 residues long: Ubiquinone/menaquinone biosynthesis C-methyltransferase UbiE (251 aa).

S-adenosyl-L-methionine contacts are provided by residues Thr74, Asp95, Asn123 to Ala124, and Ser140.

The protein belongs to the class I-like SAM-binding methyltransferase superfamily. MenG/UbiE family.

The enzyme catalyses a 2-demethylmenaquinol + S-adenosyl-L-methionine = a menaquinol + S-adenosyl-L-homocysteine + H(+). It catalyses the reaction a 2-methoxy-6-(all-trans-polyprenyl)benzene-1,4-diol + S-adenosyl-L-methionine = a 5-methoxy-2-methyl-3-(all-trans-polyprenyl)benzene-1,4-diol + S-adenosyl-L-homocysteine + H(+). It functions in the pathway quinol/quinone metabolism; menaquinone biosynthesis; menaquinol from 1,4-dihydroxy-2-naphthoate: step 2/2. It participates in cofactor biosynthesis; ubiquinone biosynthesis. Its function is as follows. Methyltransferase required for the conversion of demethylmenaquinol (DMKH2) to menaquinol (MKH2) and the conversion of 2-polyprenyl-6-methoxy-1,4-benzoquinol (DDMQH2) to 2-polyprenyl-3-methyl-6-methoxy-1,4-benzoquinol (DMQH2). This chain is Ubiquinone/menaquinone biosynthesis C-methyltransferase UbiE, found in Enterobacter sp. (strain 638).